The following is a 258-amino-acid chain: Aspartate/glutamate leucyltransferase (258 aa).

It belongs to the R-transferase family. Bpt subfamily.

It is found in the cytoplasm. The enzyme catalyses N-terminal L-glutamyl-[protein] + L-leucyl-tRNA(Leu) = N-terminal L-leucyl-L-glutamyl-[protein] + tRNA(Leu) + H(+). It catalyses the reaction N-terminal L-aspartyl-[protein] + L-leucyl-tRNA(Leu) = N-terminal L-leucyl-L-aspartyl-[protein] + tRNA(Leu) + H(+). Functionally, functions in the N-end rule pathway of protein degradation where it conjugates Leu from its aminoacyl-tRNA to the N-termini of proteins containing an N-terminal aspartate or glutamate. The sequence is that of Aspartate/glutamate leucyltransferase from Rhizobium leguminosarum bv. trifolii (strain WSM2304).